The sequence spans 460 residues: ERAD-associated E3 ubiquitin-protein ligase HRD1B (460 aa).

The Cytoplasmic portion of the chain corresponds to 1-3; sequence MIQ. A helical membrane pass occupies residues 4 to 24; sequence LKVYAGLSTLATLVVIYHAFS. Residues 25–40 are Lumenal-facing; it reads SRGQFYPATVYLSTSK. Residues 41 to 61 form a helical membrane-spanning segment; that stretch reads INLVVLLNMGLVLMLSLWNLV. At 62-98 the chain is on the cytoplasmic side; it reads KIVFLGSLREAEVERLNEQAWRELMEILFAITIFRQD. A helical membrane pass occupies residues 99-119; it reads FSVGFISLVVTLLLIKGLHWM. Over 120–140 the chain is Lumenal; sequence AQKRVEYIETTPSVTLLSHVR. Residues 141-161 form a helical membrane-spanning segment; it reads IVSFMVFLLILDCLLTYSSIQ. Residues 162-170 lie on the Cytoplasmic side of the membrane; that stretch reads QLIQSRKAS. A helical transmembrane segment spans residues 171–191; it reads MSVFFTFEYMILATTTVSIIV. Topologically, residues 192–225 are lumenal; sequence KYAFYVTDMLKEGQWEGKPVYTFYLELVRDLLHL. A helical membrane pass occupies residues 226-246; that stretch reads SMYLCFFLMIFMNYGLPLHLI. The Cytoplasmic portion of the chain corresponds to 247 to 460; that stretch reads RELYETFRNF…TKGKSVADTA (214 aa). The RING-type; atypical zinc finger occupies 292–330; the sequence is CIICREEMTSAKKLVCGHLFHVHCLRSWLERQNTCPTCR. The disordered stretch occupies residues 339 to 378; sequence ATSTASGNRGPHQESLQQGTGTSSSDGQGSSVSAAASENM. Residues 353 to 375 show a composition bias toward low complexity; it reads SLQQGTGTSSSDGQGSSVSAAAS.

It belongs to the HRD1 family.

The protein localises to the endoplasmic reticulum membrane. The enzyme catalyses S-ubiquitinyl-[E2 ubiquitin-conjugating enzyme]-L-cysteine + [acceptor protein]-L-lysine = [E2 ubiquitin-conjugating enzyme]-L-cysteine + N(6)-ubiquitinyl-[acceptor protein]-L-lysine.. It participates in protein modification; protein ubiquitination. In terms of biological role, probable component of the HRD1 ubiquitin ligase complex that mediates the rapid degradation of misfolded endoplasmic reticulum (ER) proteins, a process called ER-associated degradation (ERAD). Targets the misfolded LRR receptor kinase BRI1. Functions redundantly with HRD3A. The polypeptide is ERAD-associated E3 ubiquitin-protein ligase HRD1B (Arabidopsis thaliana (Mouse-ear cress)).